Here is a 646-residue protein sequence, read N- to C-terminus: uncharacterized protein (646 aa).

8 consecutive transmembrane segments (helical) span residues 20-42, 55-77, 97-115, 127-149, 159-181, 188-206, 216-238, and 251-273; these read ILSR…LYLL, FLAG…IHQV, LLHF…HYML, YTFD…FSYW, IAFV…FFKL, ILLG…LLLA, YGAV…YHLF, and WVTM…IGTA.

The protein localises to the cell membrane. This is an uncharacterized protein from Bacillus subtilis (strain 168).